The chain runs to 788 residues: Spastin (788 aa).

The interval 1 to 105 is disordered; it reads MVRTKNQSSS…PRSAGGPSSV (105 aa). The Cytoplasmic portion of the chain corresponds to 1 to 116; sequence MVRTKNQSSS…KQNLYVVSFP (116 aa). A required for localization to punctate cytoplasmic foci region spans residues 1–227; the sequence is MVRTKNQSSS…NRSGSGYSPG (227 aa). 2 stretches are compositionally biased toward low complexity: residues 8–48 and 57–75; these read SSSS…SSHR and ATNV…SSPD. An intramembrane region (helical) is located at residues 117-137; it reads IIFLFNVLRSLIYQLFCIFRY. The Cytoplasmic portion of the chain corresponds to 138-788; the sequence is LYGASTKVIY…WSSDYGDITI (651 aa). The tract at residues 227–788 is sufficient for interaction with microtubules and microtubule severing; sequence GPGDPLLAKQ…WSSDYGDITI (562 aa). One can recognise an MIT domain in the interval 240–315; sequence HRRAFEYISK…SMARDRLHFL (76 aa). Basic and acidic residues predominate over residues 330-353; it reads KEEQKPNPSREQHQKPQKAREAAD. Positions 330–484 are disordered; sequence KEEQKPNPSR…SGSGSGASTP (155 aa). Low complexity predominate over residues 380–400; it reads LTTPRISATATTPTSSSSLAS. Composition is skewed to polar residues over residues 419–433 and 453–469; these read NKSQ…SKTS and QFSS…RTPI. Residues 471–485 form a required for interaction with microtubules region; sequence NNGASGSGSGASTPV. 553–560 lines the ATP pocket; it reads GPPGNGKT.

The protein belongs to the AAA ATPase family. Spastin subfamily. Homohexamer. The homohexamer is stabilized by ATP-binding. The homohexamer may adopt a ring conformation through which microtubules pass prior to being severed. Interacts with microtubules. Interacts with atl; may be involved in microtubule dynamics.

The protein localises to the membrane. The protein resides in the cytoplasm. Its subcellular location is the cytoskeleton. It localises to the microtubule organizing center. It is found in the centrosome. The protein localises to the chromosome. The protein resides in the lipid droplet. It catalyses the reaction n ATP + n H2O + a microtubule = n ADP + n phosphate + (n+1) alpha/beta tubulin heterodimers.. ATP-dependent microtubule severing protein. Stimulates microtubule minus-end depolymerization and poleward microtubule flux in the mitotic spindle. Regulates microtubule stability in the neuromuscular junction synapse. Involved in lipid metabolism by regulating the size and distribution of lipid droplets. Involved in axon regeneration by regulating microtubule severing. The polypeptide is Spastin (Drosophila pseudoobscura pseudoobscura (Fruit fly)).